We begin with the raw amino-acid sequence, 442 residues long: 3-phosphoshikimate 1-carboxyvinyltransferase (442 aa).

3-phosphoshikimate contacts are provided by K25, S26, and R30. K25 lines the phosphoenolpyruvate pocket. Phosphoenolpyruvate is bound by residues G97 and R125. Residues S170, Q172, D323, and K350 each coordinate 3-phosphoshikimate. Residue Q172 coordinates phosphoenolpyruvate. The active-site Proton acceptor is the D323. Phosphoenolpyruvate contacts are provided by R354 and R399.

The protein belongs to the EPSP synthase family. Monomer.

The protein localises to the cytoplasm. It carries out the reaction 3-phosphoshikimate + phosphoenolpyruvate = 5-O-(1-carboxyvinyl)-3-phosphoshikimate + phosphate. It functions in the pathway metabolic intermediate biosynthesis; chorismate biosynthesis; chorismate from D-erythrose 4-phosphate and phosphoenolpyruvate: step 6/7. Catalyzes the transfer of the enolpyruvyl moiety of phosphoenolpyruvate (PEP) to the 5-hydroxyl of shikimate-3-phosphate (S3P) to produce enolpyruvyl shikimate-3-phosphate and inorganic phosphate. This is 3-phosphoshikimate 1-carboxyvinyltransferase from Bartonella henselae (strain ATCC 49882 / DSM 28221 / CCUG 30454 / Houston 1) (Rochalimaea henselae).